The sequence spans 372 residues: Actin-related protein T3 (372 aa).

It belongs to the actin family. In terms of assembly, interacts with PFN3. In terms of tissue distribution, ubiquitously expressed.

It is found in the cytoplasm. Its subcellular location is the cytoskeleton. The protein localises to the nucleus. In Homo sapiens (Human), this protein is Actin-related protein T3 (ACTRT3).